The sequence spans 26 residues: Protein YsdD (26 aa).

Positions 1 to 26 are disordered; it reads MTIDKNWLNRSNKDPGRSLRFTHQPV.

The polypeptide is Protein YsdD (Escherichia coli (strain K12)).